The sequence spans 561 residues: (+)-alpha-pinene synthase TPS2FN (561 aa).

(2E)-geranyl diphosphate contacts are provided by Arg-276, Asp-313, Asp-317, Arg-455, and Asp-458. Mg(2+) contacts are provided by Asp-313 and Asp-317. The DDXXD motif motif lies at 313–317 (DDIYD). Mg(2+)-binding residues include Asp-458, Thr-462, and Glu-466.

Belongs to the terpene synthase family. Tpsb subfamily. Requires Mg(2+) as cofactor. The cofactor is Mn(2+). In terms of tissue distribution, expressed in glandular trichomes two to four weeks after flowering onset.

The enzyme catalyses (2E)-geranyl diphosphate = (1R,5R)-alpha-pinene + diphosphate. It catalyses the reaction (2E)-geranyl diphosphate = (4S)-limonene + diphosphate. It carries out the reaction (2E)-geranyl diphosphate = sabinene + diphosphate. The catalysed reaction is (2E)-geranyl diphosphate = beta-phellandrene + diphosphate. The enzyme catalyses (2E)-geranyl diphosphate = camphene + diphosphate. It catalyses the reaction (2E)-geranyl diphosphate = isoterpinolene + diphosphate. The protein operates within secondary metabolite biosynthesis; terpenoid biosynthesis. Its pathway is terpene metabolism; (-)-alpha-pinene biosynthesis; (-)-alpha-pinene from geranyl diphosphate: step 1/1. In terms of biological role, involved in monoterpene (C10) olefins biosynthesis, constituants of cannabinoids and terpenoids-rich resins. Catalyzes mainly the conversion of (2E)-geranyl diphosphate to (+)-alpha-pinene, and also produces minor products such as camphene, sabinene, beta-phellandrene, (-)-limonene and isoterpinolene. In Cannabis sativa (Hemp), this protein is (+)-alpha-pinene synthase TPS2FN.